Consider the following 405-residue polypeptide: S-adenosylmethionine synthase (405 aa).

Position 139–144 (Gly-139–Asp-144) interacts with ATP.

This sequence belongs to the AdoMet synthase 2 family. The cofactor is Mg(2+).

The catalysed reaction is L-methionine + ATP + H2O = S-adenosyl-L-methionine + phosphate + diphosphate. The protein operates within amino-acid biosynthesis; S-adenosyl-L-methionine biosynthesis; S-adenosyl-L-methionine from L-methionine: step 1/1. In terms of biological role, catalyzes the formation of S-adenosylmethionine from methionine and ATP. The polypeptide is S-adenosylmethionine synthase (Thermococcus onnurineus (strain NA1)).